The primary structure comprises 390 residues: Acetylornithine aminotransferase (390 aa).

Pyridoxal 5'-phosphate contacts are provided by residues Gly105–Ala106 and Phe132. Position 135 (Arg135) interacts with N(2)-acetyl-L-ornithine. Asp217 to Gln220 is a binding site for pyridoxal 5'-phosphate. Lys246 carries the N6-(pyridoxal phosphate)lysine modification. Ser274 lines the N(2)-acetyl-L-ornithine pocket. Residue Thr275 coordinates pyridoxal 5'-phosphate.

This sequence belongs to the class-III pyridoxal-phosphate-dependent aminotransferase family. ArgD subfamily. In terms of assembly, homodimer. It depends on pyridoxal 5'-phosphate as a cofactor.

The protein resides in the cytoplasm. It catalyses the reaction N(2)-acetyl-L-ornithine + 2-oxoglutarate = N-acetyl-L-glutamate 5-semialdehyde + L-glutamate. It participates in amino-acid biosynthesis; L-arginine biosynthesis; N(2)-acetyl-L-ornithine from L-glutamate: step 4/4. This is Acetylornithine aminotransferase from Methanothermobacter thermautotrophicus (strain ATCC 29096 / DSM 1053 / JCM 10044 / NBRC 100330 / Delta H) (Methanobacterium thermoautotrophicum).